The following is a 136-amino-acid chain: Small ribosomal subunit protein eS12 (136 aa).

Belongs to the eukaryotic ribosomal protein eS12 family.

The chain is Small ribosomal subunit protein eS12 (rps12) from Dictyostelium discoideum (Social amoeba).